A 291-amino-acid chain; its full sequence is 4-diphosphocytidyl-2-C-methyl-D-erythritol kinase (291 aa).

Lysine 8 is a catalytic residue. Proline 89 to serine 99 is an ATP binding site. Residue aspartate 131 is part of the active site.

It belongs to the GHMP kinase family. IspE subfamily.

It carries out the reaction 4-CDP-2-C-methyl-D-erythritol + ATP = 4-CDP-2-C-methyl-D-erythritol 2-phosphate + ADP + H(+). It functions in the pathway isoprenoid biosynthesis; isopentenyl diphosphate biosynthesis via DXP pathway; isopentenyl diphosphate from 1-deoxy-D-xylulose 5-phosphate: step 3/6. Its function is as follows. Catalyzes the phosphorylation of the position 2 hydroxy group of 4-diphosphocytidyl-2C-methyl-D-erythritol. In Chlamydia caviae (strain ATCC VR-813 / DSM 19441 / 03DC25 / GPIC) (Chlamydophila caviae), this protein is 4-diphosphocytidyl-2-C-methyl-D-erythritol kinase.